A 390-amino-acid chain; its full sequence is Cell adhesion molecule 4 (390 aa).

The signal sequence occupies residues 1-27 (MAPALTALNRCFVLGILLLVTAGTAFS). The 95-residue stretch at 28–122 (QEVQAENVTV…DTHHQIATLT (95 aa)) folds into the Ig-like V-type domain. The Extracellular portion of the chain corresponds to 28 to 326 (QEVQAENVTV…IEAQTQVPYA (299 aa)). 2 N-linked (GlcNAc...) asparagine glycosylation sites follow: asparagine 34 and asparagine 70. Cystine bridges form between cysteine 47–cysteine 107, cysteine 148–cysteine 202, and cysteine 247–cysteine 293. Ig-like C2-type domains lie at 127–219 (PDNP…TQYE) and 226–309 (PTAS…YVLV). Residues asparagine 264 and asparagine 288 are each glycosylated (N-linked (GlcNAc...) asparagine). A helical membrane pass occupies residues 327–347 (VIGGILALLVFLVICILIVMV). At 348 to 390 (WCSVRQKGSYLTHEASGLDEHGEAREAFLNGGENHKRKEEFFI) the chain is on the cytoplasmic side.

It belongs to the nectin family.

The protein resides in the membrane. In terms of biological role, involved in the cell-cell adhesion. In Xenopus laevis (African clawed frog), this protein is Cell adhesion molecule 4 (cadm4).